We begin with the raw amino-acid sequence, 435 residues long: Histidine--tRNA ligase (435 aa).

This sequence belongs to the class-II aminoacyl-tRNA synthetase family. Homodimer.

The protein localises to the cytoplasm. The catalysed reaction is tRNA(His) + L-histidine + ATP = L-histidyl-tRNA(His) + AMP + diphosphate + H(+). This Synechococcus elongatus (strain ATCC 33912 / PCC 7942 / FACHB-805) (Anacystis nidulans R2) protein is Histidine--tRNA ligase.